A 298-amino-acid polypeptide reads, in one-letter code: NAD-dependent L-serine dehydrogenase (298 aa).

NAD(+) is bound by residues 2 to 31 (KQIA…NVFD), 65 to 66 (LP), Pro-66, and Thr-96. Lys-171 is a catalytic residue. Lys-246 lines the NAD(+) pocket.

Belongs to the HIBADH-related family. As to quaternary structure, homotetramer, dimer of dimers.

The enzyme catalyses L-serine + NAD(+) = aminoacetaldehyde + CO2 + NADH. It participates in amino-acid degradation. Functionally, NAD-dependent L-serine dehydrogenase that catalyzes the oxidation of L-serine and methyl-L-serine and is possibly involved in serine catabolism. Has low activity toward beta-hydroxyisobutyrate. The protein is NAD-dependent L-serine dehydrogenase of Pseudomonas aeruginosa (strain ATCC 15692 / DSM 22644 / CIP 104116 / JCM 14847 / LMG 12228 / 1C / PRS 101 / PAO1).